A 142-amino-acid polypeptide reads, in one-letter code: Large ribosomal subunit protein uL11 (142 aa).

This sequence belongs to the universal ribosomal protein uL11 family. In terms of assembly, part of the ribosomal stalk of the 50S ribosomal subunit. Interacts with L10 and the large rRNA to form the base of the stalk. L10 forms an elongated spine to which L12 dimers bind in a sequential fashion forming a multimeric L10(L12)X complex. In terms of processing, one or more lysine residues are methylated.

Its function is as follows. Forms part of the ribosomal stalk which helps the ribosome interact with GTP-bound translation factors. The sequence is that of Large ribosomal subunit protein uL11 from Bradyrhizobium diazoefficiens (strain JCM 10833 / BCRC 13528 / IAM 13628 / NBRC 14792 / USDA 110).